Reading from the N-terminus, the 111-residue chain is Large ribosomal subunit protein uL22 (111 aa).

Belongs to the universal ribosomal protein uL22 family. As to quaternary structure, part of the 50S ribosomal subunit.

Functionally, this protein binds specifically to 23S rRNA; its binding is stimulated by other ribosomal proteins, e.g. L4, L17, and L20. It is important during the early stages of 50S assembly. It makes multiple contacts with different domains of the 23S rRNA in the assembled 50S subunit and ribosome. In terms of biological role, the globular domain of the protein is located near the polypeptide exit tunnel on the outside of the subunit, while an extended beta-hairpin is found that lines the wall of the exit tunnel in the center of the 70S ribosome. The protein is Large ribosomal subunit protein uL22 of Chlamydia felis (strain Fe/C-56) (Chlamydophila felis).